The primary structure comprises 248 residues: Ribosomal RNA small subunit methyltransferase G (248 aa).

Residues Gly-85, Phe-90, 137–138, and Arg-156 each bind S-adenosyl-L-methionine; that span reads IE.

It belongs to the methyltransferase superfamily. RNA methyltransferase RsmG family.

It localises to the cytoplasm. Specifically methylates the N7 position of a guanine in 16S rRNA. This chain is Ribosomal RNA small subunit methyltransferase G, found in Parasynechococcus marenigrum (strain WH8102).